We begin with the raw amino-acid sequence, 970 residues long: Sodium/calcium exchanger 1 (970 aa).

Residues 1–32 (MLRLSLPPNVSMGFRLVALVALLFSHVDHITA) form the signal peptide. The Extracellular segment spans residues 33–71 (DTEAETGGNETTECTGSYYCKKGVILPIWEPQDPSFGDK). Residue asparagine 41 is glycosylated (N-linked (GlcNAc...) asparagine). Residues 72–92 (IARATVYFVAMVYMFLGVSII) form a helical membrane-spanning segment. Residues 93-133 (ADRFMSSIEVITSQEKEITIKKPNGETTKTTVRIWNETVSN) lie on the Cytoplasmic side of the membrane. Residues 134–154 (LTLMALGSSAPEILLSVIEVC) traverse the membrane as a helical segment. One copy of the Alpha-1 repeat lies at 138 to 178 (ALGSSAPEILLSVIEVCGHNFTAGDLGPSTIVGSAAFNMFI). Residues 155-167 (GHNFTAGDLGPST) lie on the Extracellular side of the membrane. N-linked (GlcNAc...) asparagine glycosylation is present at asparagine 157. The chain crosses the membrane as a helical span at residues 168 to 188 (IVGSAAFNMFIIIALCVYVVP). Topologically, residues 189-201 (DGETRKIKHLRVF) are cytoplasmic. Residues 202-222 (FVTAAWSIFAYTWLYIILSVS) form a helical membrane-spanning segment. The Extracellular portion of the chain corresponds to 223–228 (SPGVVE). Residues 229–249 (VWEGLLTFFFFPICVVFAWVA) traverse the membrane as a helical segment. Over 250–797 (DRRLLFYKYV…FVPPTEYWNG (548 aa)) the chain is Cytoplasmic. Residues 251–270 (RRLLFYKYVYKRYRAGKQRG) form a putative calmodulin-binding region region. Serine 282 and serine 389 each carry phosphoserine. Calx-beta domains follow at residues 393–493 (VNME…VHLS) and 524–624 (ATIT…IEIG). 16 residues coordinate Ca(2+): glutamate 417, aspartate 453, aspartate 478, aspartate 479, isoleucine 481, glutamate 483, glutamate 486, aspartate 530, aspartate 531, aspartate 532, glutamate 548, aspartate 584, aspartate 610, glutamate 611, glutamate 612, and glutamate 715. Residues 798–818 (WACFIVSILMIGLLTAFIGDL) traverse the membrane as a helical segment. At 819 to 821 (ASH) the chain is on the extracellular side. The chain crosses the membrane as a helical span at residues 822 to 842 (FGCTIGLKDSVTAVVFVALGT). The Alpha-2 repeat unit spans residues 839–875 (ALGTSVPDTFASKVAATQDQYADASIGNVTGSNAVNV). At 843 to 871 (SVPDTFASKVAATQDQYADASIGNVTGSN) the chain is on the cytoplasmic side. A helical membrane pass occupies residues 872 to 892 (AVNVFLGIGVAWSIAAIYHAA). Over 893-903 (NGEQFKVSPGT) the chain is Extracellular. A helical transmembrane segment spans residues 904 to 924 (LAFSVTLFTIFAFINVGVLLY). Residues 925–941 (RRRPEIGGELGGPRTAK) are Cytoplasmic-facing. A helical transmembrane segment spans residues 942–962 (LLTSSLFVLLWLLYIFFSSLE). At 963–970 (AYCHIKGF) the chain is on the extracellular side.

This sequence belongs to the Ca(2+):cation antiporter (CaCA) (TC 2.A.19) family. SLC8 subfamily. In terms of tissue distribution, detected in heart, kidney and brain (at protein level).

Its subcellular location is the cell membrane. The enzyme catalyses Ca(2+)(in) + 3 Na(+)(out) = Ca(2+)(out) + 3 Na(+)(in). Its activity is regulated as follows. Activated by micromolar levels of Ca(2+). Its function is as follows. Mediates the exchange of one Ca(2+) ion against three to four Na(+) ions across the cell membrane, and thereby contributes to the regulation of cytoplasmic Ca(2+) levels and Ca(2+)-dependent cellular processes. Contributes to Ca(2+) transport during excitation-contraction coupling in muscle. In a first phase, voltage-gated channels mediate the rapid increase of cytoplasmic Ca(2+) levels due to release of Ca(2+) stores from the endoplasmic reticulum. SLC8A1 mediates the export of Ca(2+) from the cell during the next phase, so that cytoplasmic Ca(2+) levels rapidly return to baseline. Required for normal embryonic heart development and the onset of heart contractions. This chain is Sodium/calcium exchanger 1 (Slc8a1), found in Mus musculus (Mouse).